Consider the following 201-residue polypeptide: Adenylyl-sulfate kinase (201 aa).

Position 35–42 (35–42 (GLSGSGKS)) interacts with ATP. Catalysis depends on Ser-109, which acts as the Phosphoserine intermediate.

It belongs to the APS kinase family.

It catalyses the reaction adenosine 5'-phosphosulfate + ATP = 3'-phosphoadenylyl sulfate + ADP + H(+). It participates in sulfur metabolism; hydrogen sulfide biosynthesis; sulfite from sulfate: step 2/3. Functionally, catalyzes the synthesis of activated sulfate. This chain is Adenylyl-sulfate kinase, found in Salmonella arizonae (strain ATCC BAA-731 / CDC346-86 / RSK2980).